The primary structure comprises 377 residues: Naringenin,2-oxoglutarate 3-dioxygenase (377 aa).

One can recognise a Fe2OG dioxygenase domain in the interval 193-297 (CVDMDQKVVV…RLSIATFQNP (105 aa)). Positions 220, 222, and 278 each coordinate Fe cation. 2-oxoglutarate is bound at residue arginine 288.

This sequence belongs to the iron/ascorbate-dependent oxidoreductase family. The cofactor is Fe(2+). Requires L-ascorbate as cofactor.

The enzyme catalyses a (2S)-flavan-4-one + 2-oxoglutarate + O2 = a (2R,3R)-dihydroflavonol + succinate + CO2. The protein operates within secondary metabolite biosynthesis; flavonoid biosynthesis. Catalyzes the 3-beta-hydroxylation of 2S-flavanones to 2R,3R-dihydroflavonols which are intermediates in the biosynthesis of flavonols, anthocyanidins, catechins and proanthocyanidins in plants. The protein is Naringenin,2-oxoglutarate 3-dioxygenase of Hordeum vulgare (Barley).